Here is a 165-residue protein sequence, read N- to C-terminus: MPPKFDPNEVKVITLRATGGEVGASSALAPKIGPLGLSPKKVGEDIAKATGDWKGLRVTVKLTIQNRQAAVSVVPTASALVIRALKEPPRDRKKEKNIKHNKSVSFDEIVEIARTMRFKSFSKELKGTVLEVLGTAFSVGCQVDGKSPKAVQEAIHAGEIDVPEE.

At arginine 67 the chain carries N5-methylarginine.

Belongs to the universal ribosomal protein uL11 family. In terms of assembly, component of the large ribosomal subunit (LSU). Mature N.crassa ribosomes consist of a small (40S) and a large (60S) subunit. The 40S small subunit contains 1 molecule of ribosomal RNA (18S rRNA) and at least 32 different proteins. The large 60S subunit contains 3 rRNA molecules (26S, 5.8S and 5S rRNA) and at least 42 different proteins.

It localises to the cytoplasm. Component of the ribosome, a large ribonucleoprotein complex responsible for the synthesis of proteins in the cell. The small ribosomal subunit (SSU) binds messenger RNAs (mRNAs) and translates the encoded message by selecting cognate aminoacyl-transfer RNA (tRNA) molecules. The large subunit (LSU) contains the ribosomal catalytic site termed the peptidyl transferase center (PTC), which catalyzes the formation of peptide bonds, thereby polymerizing the amino acids delivered by tRNAs into a polypeptide chain. The nascent polypeptides leave the ribosome through a tunnel in the LSU and interact with protein factors that function in enzymatic processing, targeting, and the membrane insertion of nascent chains at the exit of the ribosomal tunnel. The chain is Large ribosomal subunit protein uL11 (rpl-12) from Neurospora crassa (strain ATCC 24698 / 74-OR23-1A / CBS 708.71 / DSM 1257 / FGSC 987).